An 863-amino-acid polypeptide reads, in one-letter code: Transforming growth factor-beta receptor-associated protein 1 homolog (863 aa).

Residues 23–297 (RINIECIECC…QLLQDFEGKV (275 aa)) enclose the CNH domain. The CHCR repeat unit spans residues 564–729 (RPTSEERRGQ…LLSVYLDPDV (166 aa)).

This sequence belongs to the TRAP1 family. As to quaternary structure, component of the putative class C core vacuole/endosome tethering (CORVET) complex.

The protein resides in the cytoplasm. Its subcellular location is the early endosome. Its function is as follows. Plays a role in the TGF-beta signaling pathway. In terms of biological role, plays a role in vesicle-mediated protein trafficking of the endocytic membrane transport pathway. Believed to act as a component of the putative CORVET endosomal tethering complexes which is proposed to be involved in the Rab5-to-Rab7 endosome conversion probably implicating MON1A/B, and via binding SNAREs and SNARE complexes to mediate tethering and docking events during SNARE-mediated membrane fusion. The CORVET complex is proposed to function as a Rab5 effector to mediate early endosome fusion probably in specific endosome subpopulations. The sequence is that of Transforming growth factor-beta receptor-associated protein 1 homolog (tgfbrap1) from Danio rerio (Zebrafish).